The following is a 224-amino-acid chain: 7-cyano-7-deazaguanine synthase (224 aa).

An ATP-binding site is contributed by 10–20 (LSGGLDSATVA). Zn(2+) is bound by residues cysteine 189, cysteine 199, cysteine 202, and cysteine 205.

It belongs to the QueC family. Requires Zn(2+) as cofactor.

The catalysed reaction is 7-carboxy-7-deazaguanine + NH4(+) + ATP = 7-cyano-7-deazaguanine + ADP + phosphate + H2O + H(+). The protein operates within purine metabolism; 7-cyano-7-deazaguanine biosynthesis. Its function is as follows. Catalyzes the ATP-dependent conversion of 7-carboxy-7-deazaguanine (CDG) to 7-cyano-7-deazaguanine (preQ(0)). This is 7-cyano-7-deazaguanine synthase from Azotobacter vinelandii (strain DJ / ATCC BAA-1303).